We begin with the raw amino-acid sequence, 381 residues long: Lipid-A-disaccharide synthase (381 aa).

This sequence belongs to the LpxB family.

It carries out the reaction a lipid X + a UDP-2-N,3-O-bis[(3R)-3-hydroxyacyl]-alpha-D-glucosamine = a lipid A disaccharide + UDP + H(+). The protein operates within bacterial outer membrane biogenesis; LPS lipid A biosynthesis. Its function is as follows. Condensation of UDP-2,3-diacylglucosamine and 2,3-diacylglucosamine-1-phosphate to form lipid A disaccharide, a precursor of lipid A, a phosphorylated glycolipid that anchors the lipopolysaccharide to the outer membrane of the cell. The polypeptide is Lipid-A-disaccharide synthase (Solibacter usitatus (strain Ellin6076)).